Consider the following 588-residue polypeptide: Putative ABC transporter ATP-binding protein PAM_020 (588 aa).

ABC transporter domains are found at residues 6-247 (IIFK…GIQE) and 317-551 (LQLQ…TSLN). ATP contacts are provided by residues 40 to 47 (GKNGSGKS) and 351 to 358 (GKNGSGKS).

It belongs to the ABC transporter superfamily.

It localises to the cell membrane. Functionally, probably part of an ABC transporter complex. Responsible for energy coupling to the transport system. This Onion yellows phytoplasma (strain OY-M) protein is Putative ABC transporter ATP-binding protein PAM_020.